We begin with the raw amino-acid sequence, 213 residues long: A-type ATP synthase subunit D (213 aa).

The protein belongs to the V-ATPase D subunit family. Has multiple subunits with at least A(3), B(3), C, D, E, F, H, I and proteolipid K(x).

The protein resides in the cell membrane. Component of the A-type ATP synthase that produces ATP from ADP in the presence of a proton gradient across the membrane. The chain is A-type ATP synthase subunit D from Saccharolobus solfataricus (strain ATCC 35092 / DSM 1617 / JCM 11322 / P2) (Sulfolobus solfataricus).